Reading from the N-terminus, the 701-residue chain is Polyribonucleotide nucleotidyltransferase (701 aa).

Asp-487 and Asp-493 together coordinate Mg(2+). The KH domain occupies 554 to 613; that stretch reads PTMLQMKIDSDKIRDVIGKGGATIRAICEETKASIDIEDDGSVKIYGETKEAAEAAKQRV. Residues 623–691 enclose the S1 motif domain; sequence GKIYVGKVER…NRGRIKLSIK (69 aa).

This sequence belongs to the polyribonucleotide nucleotidyltransferase family. Component of the RNA degradosome, which is a multiprotein complex involved in RNA processing and mRNA degradation. Mg(2+) serves as cofactor.

The protein localises to the cytoplasm. It catalyses the reaction RNA(n+1) + phosphate = RNA(n) + a ribonucleoside 5'-diphosphate. Involved in mRNA degradation. Catalyzes the phosphorolysis of single-stranded polyribonucleotides processively in the 3'- to 5'-direction. The protein is Polyribonucleotide nucleotidyltransferase of Pseudomonas paraeruginosa (strain DSM 24068 / PA7) (Pseudomonas aeruginosa (strain PA7)).